Reading from the N-terminus, the 378-residue chain is Monomethylxanthine methyltransferase 1 (378 aa).

Residues Y18, C61, N66, D100, L101, S139, F140, and C156 each contribute to the S-adenosyl-L-homocysteine site. Theobromine contacts are provided by Y157, H160, and W161. Mg(2+) is bound by residues N178, D260, F262, and N263. Residue Y362 participates in theobromine binding.

Belongs to the methyltransferase superfamily. Type-7 methyltransferase family. The cofactor is Mg(2+). In terms of tissue distribution, expressed, at low levels, in stems, young leaves, floral buds and immature fruits (grains), but not in roots, old leaves and mature fruits.

Its subcellular location is the cytoplasm. The catalysed reaction is 7-methylxanthine + S-adenosyl-L-methionine = theobromine + S-adenosyl-L-homocysteine + H(+). It functions in the pathway alkaloid biosynthesis. In terms of biological role, involved in the biosynthesis of caffeine. Catalyzes the conversion of 7-methylxanthine (7mX) to theobromine and of paraxanthine to caffeine. Has a 5-fold preference for 7mX. This is Monomethylxanthine methyltransferase 1 from Coffea arabica (Arabian coffee).